We begin with the raw amino-acid sequence, 500 residues long: Centrosomal protein of 57 kDa (500 aa).

Over residues 1–17 (MAAASVSAASGSHLSNS) the composition is skewed to low complexity. 2 disordered regions span residues 1-34 (MAAA…HSSS) and 43-62 (KPFL…LAYP). Positions 18-34 (FAEPSRSNGSMVRHSSS) are enriched in polar residues. A phosphoserine mark is found at Ser53 and Ser55. Residues 58-239 (TLAYPESNSR…KAAELQTGLE (182 aa)) are centrosome localization domain (CLD). 2 coiled-coil regions span residues 63 to 242 (ESNS…ETNR) and 392 to 492 (ELKD…NSLQ). Residues 277–491 (GAQPHYRLCL…KDMQSIQNSL (215 aa)) are mediates interaction with microtubules. A compositionally biased stretch (basic and acidic residues) spans 434 to 450 (KKELKATKKTLDEERNS). The interval 434–472 (KKELKATKKTLDEERNSSSRSGITGTTNKKDFMKLRPGE) is disordered. A compositionally biased stretch (polar residues) spans 451-460 (SSRSGITGTT). The span at 461 to 471 (NKKDFMKLRPG) shows a compositional bias: basic and acidic residues.

This sequence belongs to the translokin family. As to quaternary structure, homodimer and homooligomer. Interacts with microtubules. Interacts with FGF2 and RAP80. Does not interact with FGF1 or FGF2 isoform 24 kDa. In terms of tissue distribution, ubiquitous.

Its subcellular location is the nucleus. It is found in the cytoplasm. It localises to the cytoskeleton. The protein localises to the microtubule organizing center. The protein resides in the centrosome. In terms of biological role, centrosomal protein which may be required for microtubule attachment to centrosomes. May act by forming ring-like structures around microtubules. Mediates nuclear translocation and mitogenic activity of the internalized growth factor FGF2, but that of FGF1. The protein is Centrosomal protein of 57 kDa (CEP57) of Homo sapiens (Human).